A 317-amino-acid polypeptide reads, in one-letter code: tRNA dimethylallyltransferase (317 aa).

14-21 contacts ATP; it reads GPTASGKS. Position 16-21 (16-21) interacts with substrate; that stretch reads TASGKS. Interaction with substrate tRNA stretches follow at residues 39 to 42 and 163 to 167; these read DSVL and QRIQR.

Belongs to the IPP transferase family. Monomer. Mg(2+) is required as a cofactor.

It carries out the reaction adenosine(37) in tRNA + dimethylallyl diphosphate = N(6)-dimethylallyladenosine(37) in tRNA + diphosphate. Its function is as follows. Catalyzes the transfer of a dimethylallyl group onto the adenine at position 37 in tRNAs that read codons beginning with uridine, leading to the formation of N6-(dimethylallyl)adenosine (i(6)A). The polypeptide is tRNA dimethylallyltransferase (Xylella fastidiosa (strain 9a5c)).